A 394-amino-acid chain; its full sequence is Penicillopepsin-2 (394 aa).

An N-terminal signal peptide occupies residues 1 to 20; that stretch reads MVVFSKITVVLAGLATVASA. Positions 21–71 are cleaved as a propeptide — activation peptide; sequence VPTGTSRKSTFTVNQKARPVAQAKAINLPGMYASALSKYGAAVPASVKAAA. A Peptidase A1 domain is found at 87 to 391; the sequence is YLTPVNVGGT…DANGPRLGFA (305 aa). Residue Asp103 is part of the active site. Asn132 carries N-linked (GlcNAc...) asparagine glycosylation. The active site involves Asp283. Cysteines 319 and 354 form a disulfide.

This sequence belongs to the peptidase A1 family. In terms of assembly, monomer.

Its subcellular location is the secreted. It catalyses the reaction Hydrolysis of proteins with broad specificity similar to that of pepsin A, preferring hydrophobic residues at P1 and P1', but also cleaving 20-Gly-|-Glu-21 in the B chain of insulin. Clots milk, and activates trypsinogen.. Secreted aspartic endopeptidase that allows assimilation of proteinaceous substrates. The scissile peptide bond is attacked by a nucleophilic water molecule activated by two aspartic residues in the active site. Shows a broad primary substrate specificity. Favors hydrophobic residues at the P1 and P1' positions, but can also activate trypsinogen and hydrolyze the B chain of insulin between positions 'Gly-20' and 'Glu-21'. This Penicillium janthinellum (Penicillium vitale) protein is Penicillopepsin-2.